The chain runs to 235 residues: Chromosome partition protein MukE (235 aa).

The interval 204–235 (QQEPSQSSLLDGFDADDTGHHDSELTMQEGEV) is disordered.

The protein belongs to the MukE family. As to quaternary structure, interacts, and probably forms a ternary complex, with MukF and MukB. The complex formation is stimulated by calcium or magnesium.

It localises to the cytoplasm. The protein resides in the nucleoid. Involved in chromosome condensation, segregation and cell cycle progression. May participate in facilitating chromosome segregation by condensation DNA from both sides of a centrally located replisome during cell division. Probably acts via its interaction with MukB and MukF. The protein is Chromosome partition protein MukE of Photobacterium profundum (strain SS9).